The chain runs to 282 residues: Pantothenate synthetase (282 aa).

30–37 (MGALHAGH) contacts ATP. H37 acts as the Proton donor in catalysis. Residue Q61 participates in (R)-pantoate binding. Q61 contacts beta-alanine. Position 147–150 (147–150 (GEKD)) interacts with ATP. (R)-pantoate is bound at residue Q153. Residues V177 and 185 to 188 (LSSR) contribute to the ATP site.

The protein belongs to the pantothenate synthetase family. As to quaternary structure, homodimer.

The protein localises to the cytoplasm. It carries out the reaction (R)-pantoate + beta-alanine + ATP = (R)-pantothenate + AMP + diphosphate + H(+). It functions in the pathway cofactor biosynthesis; (R)-pantothenate biosynthesis; (R)-pantothenate from (R)-pantoate and beta-alanine: step 1/1. In terms of biological role, catalyzes the condensation of pantoate with beta-alanine in an ATP-dependent reaction via a pantoyl-adenylate intermediate. This chain is Pantothenate synthetase, found in Phocaeicola vulgatus (strain ATCC 8482 / DSM 1447 / JCM 5826 / CCUG 4940 / NBRC 14291 / NCTC 11154) (Bacteroides vulgatus).